The primary structure comprises 470 residues: Pancreatic lipase-related protein 2 (470 aa).

The signal sequence occupies residues 1–18 (MMLFVWTTGLLLLATARG). Cysteine 22 and cysteine 28 are disulfide-bonded. The tract at residues 94–106 (IHGFIDNGEKDWL) is required for galactolipase activity. Cysteine 110 and cysteine 121 are disulfide-bonded. The active-site Nucleophile is serine 172. The active-site Charge relay system is aspartate 196. 4 residues coordinate Ca(2+): glutamate 207, arginine 210, aspartate 212, and aspartate 215. Cysteine 257 and cysteine 281 are oxidised to a cystine. The interval 258-280 (EKNIISTIVDVNGFLEGITSLAA) is required for galactolipase activity. Histidine 283 functions as the Charge relay system in the catalytic mechanism. Disulfide bonds link cysteine 305–cysteine 316 and cysteine 319–cysteine 324. N-linked (GlcNAc...) asparagine glycans are attached at residues asparagine 354 and asparagine 429. One can recognise a PLAT domain in the interval 358 to 470 (WRYKVSVTLS…EDVLQSLSPC (113 aa)). Cysteine 454 and cysteine 470 form a disulfide bridge.

Belongs to the AB hydrolase superfamily. Lipase family. As to expression, pancreas.

It is found in the secreted. It localises to the zymogen granule membrane. The protein localises to the cell projection. The protein resides in the neuron projection. It carries out the reaction a triacylglycerol + H2O = a diacylglycerol + a fatty acid + H(+). The catalysed reaction is a 1,2-diacyl-3-O-(beta-D-galactosyl)-sn-glycerol + 2 H2O = 3-beta-D-galactosyl-sn-glycerol + 2 a fatty acid + 2 H(+). It catalyses the reaction 1,2,3-tri-(9Z-octadecenoyl)-glycerol + H2O = di-(9Z)-octadecenoylglycerol + (9Z)-octadecenoate + H(+). The enzyme catalyses di-(9Z)-octadecenoylglycerol + H2O = (9Z-octadecenoyl)-glycerol + (9Z)-octadecenoate + H(+). It carries out the reaction (9Z-octadecenoyl)-glycerol + H2O = glycerol + (9Z)-octadecenoate + H(+). The catalysed reaction is 1-(9Z-octadecenoyl)-glycerol + H2O = glycerol + (9Z)-octadecenoate + H(+). It catalyses the reaction 1,2,3-tripropanoylglycerol + H2O = dipropanoylglycerol + propanoate + H(+). The enzyme catalyses 1,2,3-tributanoylglycerol + H2O = dibutanoylglycerol + butanoate + H(+). It carries out the reaction 1,2,3-trioctanoylglycerol + H2O = dioctanoylglycerol + octanoate + H(+). The catalysed reaction is 1,2-didecanoylglycerol + H2O = decanoylglycerol + decanoate + H(+). It catalyses the reaction long chain 1,2-diacyl-3-O-beta-D-galactosyl-sn-glycerol + H2O = long chain acyl-3-O-beta-D-galactosyl-sn-glycerol + a fatty acid + H(+). The enzyme catalyses 1,2-dioctanoyl-3-O-beta-D-galactosyl-sn-glycerol + H2O = octanoyl-3-(beta-D-galactosyl)-sn-glycerol + octanoate + H(+). It carries out the reaction 1,2-didodecanoyl-3-beta-D-galactosyl-sn-glycerol + H2O = dodecanoyl-3-beta-D-galactosyl-sn-glycerol + dodecanoate + H(+). The catalysed reaction is 1-beta-D-galactosyl-2,3-didodecanoyl-sn-glycerol + H2O = 1-beta-D-galactosyl-dodecanoyl-sn-glycerol + dodecanoate + H(+). It catalyses the reaction a 1,2-diacyl-3-O-[alpha-D-galactosyl-(1-&gt;6)-beta-D-galactosyl]-sn-glycerol + H2O = acyl-3-O-[alpha-D-galactosyl-(1-&gt;6)-beta-D-galactosyl]-sn-glycerol + a fatty acid + H(+). The enzyme catalyses long chain 1,2-diacyl-3-O-[alpha-D-galactosyl-(1-&gt;6)-beta-D-galactosyl]-sn-glycerol + H2O = long chain acyl-3-O-[alpha-D-galactosyl-(1-&gt;6)-beta-D-galactosyl]-sn-glycerol + a fatty acid + H(+). It carries out the reaction 1,2-dioctanoyl-3-O-[alpha-D-galactosyl-(1-&gt;6)-beta-D-galactosyl]-sn-glycerol + H2O = octanoyl-3-O-[alpha-D-galactosyl-(1-&gt;6)-beta-D-galactosyl]-sn-glycerol + octanoate + H(+). The catalysed reaction is 1,2-didodecanoyl-3-O-[alpha-D-galactosyl-(1-&gt;6)-beta-D-galactosyl]-sn-glycerol + H2O = dodecanoyl-3-O-[alpha-D-galactosyl-(1-&gt;6)-beta-D-galactosyl]-sn-glycerol + dodecanoate + H(+). It catalyses the reaction a 1,2-diacyl-sn-glycero-3-phosphocholine + H2O = a monoacyl-sn-glycero-3-phosphocholine + a fatty acid + H(+). Its pathway is glycerolipid metabolism; triacylglycerol degradation. It functions in the pathway glycolipid metabolism. Its activity is regulated as follows. Triacylglycerol lipase activity is inhibited by increasing bile salts concentrations and not reactivated by CLPS. Its function is as follows. Lipase that primarily hydrolyzes triglycerides and galactosylglycerides. In neonates, may play a major role in pancreatic digestion of dietary fats such as milk fat globules enriched in long-chain triglycerides. Hydrolyzes short-, medium- and long-chain fatty acyls in triglycerides without apparent positional specificity. Can completely deacylate triacylglycerols. When the liver matures and bile salt synthesis increases, likely functions mainly as a galactolipase and monoacylglycerol lipase. Hydrolyzes monogalactosyldiglycerols (MGDG) and digalactosyldiacylglycerols (DGDG) present in a plant-based diet, releasing long-chain polyunsaturated fatty acids. Hydrolyzes medium- and long-chain fatty acyls in galactolipids. May act together with LIPF to hydrolyze partially digested triglycerides. Hydrolyzes long-chain monoglycerides with high efficiency. In cytotoxic T cells, contributes to perforin-dependent cell lysis, but is unlikely to mediate direct cytotoxicity. Also has low phospholipase activity. In neurons, required for the localization of the phospholipid 1-oleoyl-2-palmitoyl-PC (OPPC) to neurite tips through acyl chain remodeling of membrane phospholipids. The resulting OPPC-rich lipid membrane domain recruits the t-SNARE protein STX4 by selectively interacting with the STX4 transmembrane domain and this promotes surface expression of the dopamine transporter SLC6A3/DAT at neurite tips by facilitating fusion of SLC6A3-containing transport vesicles with the plasma membrane. This is Pancreatic lipase-related protein 2 from Myocastor coypus (Coypu).